The primary structure comprises 129 residues: Fluoride-specific ion channel FluC 2 (129 aa).

Helical transmembrane passes span 3 to 23 (FLYVGVFGALGGMCRYAMNLW), 32 to 52 (ATLAVNLIGCFLLAFLMRFLA), 59 to 79 (LVLLNGIGTGFIGAFTTFSAF), and 90 to 110 (GAWLFAVSYVLASFIGGLIMV). Na(+) is bound by residues Gly-71 and Thr-74.

This sequence belongs to the fluoride channel Fluc/FEX (TC 1.A.43) family.

It is found in the cell membrane. It catalyses the reaction fluoride(in) = fluoride(out). Its activity is regulated as follows. Na(+) is not transported, but it plays an essential structural role and its presence is essential for fluoride channel function. In terms of biological role, fluoride-specific ion channel. Important for reducing fluoride concentration in the cell, thus reducing its toxicity. The chain is Fluoride-specific ion channel FluC 2 from Listeria monocytogenes serovar 1/2a (strain ATCC BAA-679 / EGD-e).